A 536-amino-acid polypeptide reads, in one-letter code: MELSPRSPPEMLEESDCPSPLELKSAPSKKMWIKLRSLLRYMVKQLENGEINIEELKKNLEYTASLLEAVYIDETRQILDTEDELQELRSDAVPSEVRDWLASTFTQQARAKGRRAEEKPKFRSIVHAVQAGIFVERMFRRTYTSVGPTYSTAVLNCLKNLDLWCFDVFSLNQAADDHALRTIVFELLTRHNLISRFKIPTVFLMSFLDALETGYGKYKNPYHNQIHAADVTQTVHCFLLRTGMVHCLSEIELLAIIFAAAIHDYEHTGTTNSFHIQTKSECAIVYNDRSVLENHHISSVFRLMQDDEMNIFINLTKDEFVELRALVIEMVLATDMSCHFQQVKTMKTALQQLERIDKPKALSLLLHAADISHPTKQWLVHSRWTKALMEEFFRQGDKEAELGLPFSPLCDRTSTLVAQSQIGFIDFIVEPTFSVLTDVAEKSVQPLADEDSKSKNQPSFQWRQPSLDVEVGDPNPDVVSFRSTWVKRIQENKQKWKERAASGITNQMSIDELSPCEEEAPPSPAEDEHNQNGNLD.

Residues 1–20 form a disordered region; that stretch reads MELSPRSPPEMLEESDCPSP. Phosphoserine is present on residues Ser7 and Ser15. 2 calmodulin-binding regions span residues 27-47 and 118-141; these read PSKKMWIKLRSLLRYMVKQLE and EKPKFRSIVHAVQAGIFVERMFRR. One can recognise a PDEase domain in the interval 146–503; it reads VGPTYSTAVL…QKWKERAASG (358 aa). Catalysis depends on His223, which acts as the Proton donor. Residues His227, His263, Asp264, and Asp370 each contribute to the Zn(2+) site. Position 264 (Asp264) interacts with Mg(2+). Disordered regions lie at residues 447–474 and 494–536; these read LADEDSKSKNQPSFQWRQPSLDVEVGDP and QKWK…GNLD. Over residues 455–464 the composition is skewed to polar residues; the sequence is KNQPSFQWRQ. A phosphoserine mark is found at Ser466 and Ser514.

This sequence belongs to the cyclic nucleotide phosphodiesterase family. PDE1 subfamily. Homodimer. Zn(2+) serves as cofactor. The cofactor is Mg(2+).

It is found in the cytoplasm. It localises to the cytosol. It catalyses the reaction a nucleoside 3',5'-cyclic phosphate + H2O = a nucleoside 5'-phosphate + H(+). The catalysed reaction is 3',5'-cyclic GMP + H2O = GMP + H(+). It carries out the reaction 3',5'-cyclic AMP + H2O = AMP + H(+). Type I PDE are activated by the binding of calmodulin in the presence of Ca(2+). Its function is as follows. Cyclic nucleotide phosphodiesterase with a dual specificity for the second messengers cAMP and cGMP, which are key regulators of many important physiological processes. Has a preference for cGMP as a substrate. The protein is Dual specificity calcium/calmodulin-dependent 3',5'-cyclic nucleotide phosphodiesterase 1B of Homo sapiens (Human).